The following is a 146-amino-acid chain: Ribonuclease P protein component (146 aa).

Belongs to the RnpA family. As to quaternary structure, consists of a catalytic RNA component (M1 or rnpB) and a protein subunit.

It carries out the reaction Endonucleolytic cleavage of RNA, removing 5'-extranucleotides from tRNA precursor.. Its function is as follows. RNaseP catalyzes the removal of the 5'-leader sequence from pre-tRNA to produce the mature 5'-terminus. It can also cleave other RNA substrates such as 4.5S RNA. The protein component plays an auxiliary but essential role in vivo by binding to the 5'-leader sequence and broadening the substrate specificity of the ribozyme. In Chlorobium phaeobacteroides (strain DSM 266 / SMG 266 / 2430), this protein is Ribonuclease P protein component.